The sequence spans 237 residues: Sugar fermentation stimulation protein homolog (237 aa).

It belongs to the SfsA family.

This Pseudomonas syringae pv. syringae (strain B728a) protein is Sugar fermentation stimulation protein homolog.